A 239-amino-acid polypeptide reads, in one-letter code: MARGCLCCLKYTMFLFNLIFWLCGCGLLGVGIWLSVSQGNFATFSPSFPSLSAANLVIAIGTIVMVTGFLGCLGAIKENKCLLLSFFIVLLIILLAELILIILFFVYMDKVNENAKQDLKEGLLLYNTENNVGLKNAWNIIQAEMRCCGVTDYTDWYPVLGENTVPDRCCMENSQGCGRNSTTPLWRTGCYEKVKLWFDDNKHVLGTVGMCILIMQILGMAFSMTLFQHIHRTGKKYDA.

At 1–13 (MARGCLCCLKYTM) the chain is on the cytoplasmic side. The chain crosses the membrane as a helical span at residues 14–34 (FLFNLIFWLCGCGLLGVGIWL). The Extracellular segment spans residues 35-55 (SVSQGNFATFSPSFPSLSAAN). A helical transmembrane segment spans residues 56–76 (LVIAIGTIVMVTGFLGCLGAI). The Cytoplasmic portion of the chain corresponds to 77–85 (KENKCLLLS). The helical transmembrane segment at 86–106 (FFIVLLIILLAELILIILFFV) threads the bilayer. At 107 to 203 (YMDKVNENAK…VKLWFDDNKH (97 aa)) the chain is on the extracellular side. A glycan (N-linked (GlcNAc...) asparagine) is linked at Asn-180. Residues 204–224 (VLGTVGMCILIMQILGMAFSM) traverse the membrane as a helical segment. The Cytoplasmic portion of the chain corresponds to 225-239 (TLFQHIHRTGKKYDA).

The protein belongs to the tetraspanin (TM4SF) family. As to quaternary structure, found in a complex with GP6. In terms of processing, glycosylated. As to expression, strongly expressed in megakaryocytes, platelets and lung. Weakly expressed in bone marrow, brain and kidney (at protein level).

Its subcellular location is the membrane. This Mus musculus (Mouse) protein is Tetraspanin-9 (Tspan9).